A 421-amino-acid chain; its full sequence is Serine hydroxymethyltransferase (421 aa).

(6S)-5,6,7,8-tetrahydrofolate is bound by residues leucine 121 and 125 to 127 (GHL). Lysine 230 is subject to N6-(pyridoxal phosphate)lysine. Residue 355–357 (SPF) participates in (6S)-5,6,7,8-tetrahydrofolate binding.

This sequence belongs to the SHMT family. Homodimer. The cofactor is pyridoxal 5'-phosphate.

Its subcellular location is the cytoplasm. The catalysed reaction is (6R)-5,10-methylene-5,6,7,8-tetrahydrofolate + glycine + H2O = (6S)-5,6,7,8-tetrahydrofolate + L-serine. Its pathway is one-carbon metabolism; tetrahydrofolate interconversion. It participates in amino-acid biosynthesis; glycine biosynthesis; glycine from L-serine: step 1/1. In terms of biological role, catalyzes the reversible interconversion of serine and glycine with tetrahydrofolate (THF) serving as the one-carbon carrier. This reaction serves as the major source of one-carbon groups required for the biosynthesis of purines, thymidylate, methionine, and other important biomolecules. Also exhibits THF-independent aldolase activity toward beta-hydroxyamino acids, producing glycine and aldehydes, via a retro-aldol mechanism. The chain is Serine hydroxymethyltransferase from Psychromonas ingrahamii (strain DSM 17664 / CCUG 51855 / 37).